We begin with the raw amino-acid sequence, 897 residues long: Probable basic-leucine zipper transcription factor R (897 aa).

Disordered regions lie at residues Asp-38–Thr-88 and Tyr-128–Ser-198. Residues Asn-44–Asn-75 show a composition bias toward low complexity. Positions Ile-76–Thr-88 are enriched in polar residues. The stretch at Gln-94–Asp-137 forms a coiled coil. The span at Tyr-128 to Gln-140 shows a compositional bias: low complexity. Residues Lys-141–Thr-157 show a composition bias toward polar residues. Positions Asn-158 to Ser-198 are enriched in low complexity. Coiled coils occupy residues Leu-228–Gln-258 and Gln-330–Gln-407. The interval Leu-461 to Gln-516 is disordered. Positions Ile-484–Gln-505 are enriched in pro residues. Over residues Gln-506–Gln-516 the composition is skewed to low complexity. Positions Glu-557–Glu-620 constitute a bZIP domain. Residues Lys-559 to Lys-564 form a basic motif region. The segment at Ile-569–Leu-576 is leucine-zipper.

The protein belongs to the bZIP family.

Its subcellular location is the nucleus. Its function is as follows. Probable transcriptional regulator. The protein is Probable basic-leucine zipper transcription factor R (bzpR) of Dictyostelium discoideum (Social amoeba).